A 304-amino-acid chain; its full sequence is Glutaminase (304 aa).

Ser63, Asn114, Glu158, Asn165, Tyr189, Tyr240, and Val258 together coordinate substrate.

Belongs to the glutaminase family. As to quaternary structure, homotetramer.

The enzyme catalyses L-glutamine + H2O = L-glutamate + NH4(+). The sequence is that of Glutaminase from Shewanella oneidensis (strain ATCC 700550 / JCM 31522 / CIP 106686 / LMG 19005 / NCIMB 14063 / MR-1).